The following is a 267-amino-acid chain: Ribosomal RNA small subunit methyltransferase NEP1 (267 aa).

The interval Met-1–Leu-46 is disordered. A compositionally biased stretch (low complexity) spans Thr-16 to Ser-32. Residues Leu-195, Gly-222, Gly-227 to Asp-229, and Leu-242 to Leu-247 each bind S-adenosyl-L-methionine.

Belongs to the class IV-like SAM-binding methyltransferase superfamily. RNA methyltransferase NEP1 family. Homodimer.

It localises to the nucleus. The protein localises to the nucleolus. The enzyme catalyses a pseudouridine in rRNA + S-adenosyl-L-methionine = an N(1)-methylpseudouridine in rRNA + S-adenosyl-L-homocysteine + H(+). In terms of biological role, S-adenosyl-L-methionine-dependent pseudouridine N(1)-methyltransferase that methylates the pseudouridine corresponding to position 1189 (Psi1189) in S.cerevisiae 18S rRNA. Involved the biosynthesis of the hypermodified N1-methyl-N3-(3-amino-3-carboxypropyl) pseudouridine (m1acp3-Psi) conserved in eukaryotic 18S rRNA. Also has an essential role in 40S ribosomal subunit biogenesis independent on its methyltransferase activity, facilitating the incorporation of ribosomal protein S19 during the formation of pre-ribosomes. This Candida albicans (Yeast) protein is Ribosomal RNA small subunit methyltransferase NEP1.